Consider the following 345-residue polypeptide: Leucine zipper protein 2 (345 aa).

The signal sequence occupies residues 1–19; it reads MKFNAAHYLLPLLPALVLS. The stretch at 16–211 forms a coiled coil; sequence LVLSTRQDYE…QMKAMKETVQ (196 aa). Asn133 is a glycosylation site (N-linked (GlcNAc...) asparagine). The tract at residues 164–192 is leucine-zipper; it reads LRYGKKDLLFKAQQLTELEQKLAVAKNEL. A disordered region spans residues 223 to 345; sequence PPLSLMPSNP…GTPAREEKLL (123 aa). The segment covering 261–277 has biased composition (basic and acidic residues); it reads GHHDSSQVQATKEESRR. The span at 298–313 shows a compositional bias: polar residues; it reads PQSNSTAESELTTQKL. Asn301 carries N-linked (GlcNAc...) asparagine glycosylation.

Expression found only in the brain and spinal cord.

The protein localises to the secreted. This is Leucine zipper protein 2 (Luzp2) from Mus musculus (Mouse).